The following is a 503-amino-acid chain: Aspartyl/glutamyl-tRNA(Asn/Gln) amidotransferase subunit B (503 aa).

It belongs to the GatB/GatE family. GatB subfamily. Heterotrimer of A, B and C subunits.

The catalysed reaction is L-glutamyl-tRNA(Gln) + L-glutamine + ATP + H2O = L-glutaminyl-tRNA(Gln) + L-glutamate + ADP + phosphate + H(+). The enzyme catalyses L-aspartyl-tRNA(Asn) + L-glutamine + ATP + H2O = L-asparaginyl-tRNA(Asn) + L-glutamate + ADP + phosphate + 2 H(+). In terms of biological role, allows the formation of correctly charged Asn-tRNA(Asn) or Gln-tRNA(Gln) through the transamidation of misacylated Asp-tRNA(Asn) or Glu-tRNA(Gln) in organisms which lack either or both of asparaginyl-tRNA or glutaminyl-tRNA synthetases. The reaction takes place in the presence of glutamine and ATP through an activated phospho-Asp-tRNA(Asn) or phospho-Glu-tRNA(Gln). In Nocardia farcinica (strain IFM 10152), this protein is Aspartyl/glutamyl-tRNA(Asn/Gln) amidotransferase subunit B.